Reading from the N-terminus, the 281-residue chain is Phosphatidylserine decarboxylase proenzyme (281 aa).

Residues D90, H143, and S248 each act as charge relay system; for autoendoproteolytic cleavage activity in the active site. S248 acts as the Schiff-base intermediate with substrate; via pyruvic acid; for decarboxylase activity in catalysis. S248 carries the post-translational modification Pyruvic acid (Ser); by autocatalysis.

It belongs to the phosphatidylserine decarboxylase family. PSD-B subfamily. Prokaryotic type I sub-subfamily. In terms of assembly, heterodimer of a large membrane-associated beta subunit and a small pyruvoyl-containing alpha subunit. Pyruvate is required as a cofactor. Is synthesized initially as an inactive proenzyme. Formation of the active enzyme involves a self-maturation process in which the active site pyruvoyl group is generated from an internal serine residue via an autocatalytic post-translational modification. Two non-identical subunits are generated from the proenzyme in this reaction, and the pyruvate is formed at the N-terminus of the alpha chain, which is derived from the carboxyl end of the proenzyme. The autoendoproteolytic cleavage occurs by a canonical serine protease mechanism, in which the side chain hydroxyl group of the serine supplies its oxygen atom to form the C-terminus of the beta chain, while the remainder of the serine residue undergoes an oxidative deamination to produce ammonia and the pyruvoyl prosthetic group on the alpha chain. During this reaction, the Ser that is part of the protease active site of the proenzyme becomes the pyruvoyl prosthetic group, which constitutes an essential element of the active site of the mature decarboxylase.

The protein localises to the cell membrane. The catalysed reaction is a 1,2-diacyl-sn-glycero-3-phospho-L-serine + H(+) = a 1,2-diacyl-sn-glycero-3-phosphoethanolamine + CO2. It functions in the pathway phospholipid metabolism; phosphatidylethanolamine biosynthesis; phosphatidylethanolamine from CDP-diacylglycerol: step 2/2. Functionally, catalyzes the formation of phosphatidylethanolamine (PtdEtn) from phosphatidylserine (PtdSer). The protein is Phosphatidylserine decarboxylase proenzyme of Francisella philomiragia subsp. philomiragia (strain ATCC 25017 / CCUG 19701 / FSC 153 / O#319-036).